Reading from the N-terminus, the 273-residue chain is Transposable element Tcb2 transposase (273 aa).

It belongs to the transposase 5 family.

The protein resides in the nucleus. Probably essential for transposable element Tcb2 transposition. The polypeptide is Transposable element Tcb2 transposase (Caenorhabditis briggsae).